The primary structure comprises 253 residues: 3-deoxy-manno-octulosonate cytidylyltransferase (253 aa).

Belongs to the KdsB family.

The protein localises to the cytoplasm. It carries out the reaction 3-deoxy-alpha-D-manno-oct-2-ulosonate + CTP = CMP-3-deoxy-beta-D-manno-octulosonate + diphosphate. Its pathway is nucleotide-sugar biosynthesis; CMP-3-deoxy-D-manno-octulosonate biosynthesis; CMP-3-deoxy-D-manno-octulosonate from 3-deoxy-D-manno-octulosonate and CTP: step 1/1. It functions in the pathway bacterial outer membrane biogenesis; lipopolysaccharide biosynthesis. Its function is as follows. Activates KDO (a required 8-carbon sugar) for incorporation into bacterial lipopolysaccharide in Gram-negative bacteria. The protein is 3-deoxy-manno-octulosonate cytidylyltransferase of Idiomarina loihiensis (strain ATCC BAA-735 / DSM 15497 / L2-TR).